We begin with the raw amino-acid sequence, 455 residues long: Fez family zinc finger protein 2 (455 aa).

The disordered stretch occupies residues 1–22 (MASSASLETMVPPACPRAGASP). An Engrailed homology 1 repressor motif is present at residues 27–42 (TLAFSIERIMAKTSEP). C2H2-type zinc fingers lie at residues 272–294 (FTCEVCGKVFNAHYNLTRHMPVH), 300–322 (FVCKVCGKGFRQASTLCRHKIIH), 328–350 (HKCNQCGKAFNRSSTLNTHIRIH), 356–378 (FVCEFCGKGFHQKGNYKNHKLTH), 384–406 (YKCTICNKAFHQVYNLTFHMHTH), and 412–435 (FTCATCGKGFCRNFDLKKHVRKLH).

Belongs to the krueppel C2H2-type zinc-finger protein family. Highly expressed in neocortical layer V, moderately expressed in layer VI. Expressed in subcortically projecting neurons.

It localises to the nucleus. Functionally, transcription repressor. Required for the specification of corticospinal motor neurons and other subcerebral projection neurons. May play a role in layer and neuronal subtype-specific patterning of subcortical projections and axonal fasciculation. Controls the development of dendritic arborization and spines of large layer V pyramidal neurons. Plays a role in rostro-caudal patterning of the diencephalon and in prethalamic formation. In Mus musculus (Mouse), this protein is Fez family zinc finger protein 2 (Fezf2).